We begin with the raw amino-acid sequence, 390 residues long: Cold-responsive protein kinase 1 (390 aa).

The 280-residue stretch at 41–320 (FSAENKIGEG…VRLLTGEKDI (280 aa)) folds into the Protein kinase domain. ATP is bound by residues 47-55 (IGEGGFGSV) and lysine 69. Tyrosine 114 bears the Phosphotyrosine mark. Aspartate 169 functions as the Proton acceptor in the catalytic mechanism. Residues serine 173 and serine 202 each carry the phosphoserine modification. Phosphothreonine is present on residues threonine 203 and threonine 208. Tyrosine 216 carries the post-translational modification Phosphotyrosine. Residues 345-390 (TKTEQVNRQNYTNPSSSSNGSSRDHSNAYSSGASSANAGNTFSSTI) form a disordered region. Low complexity predominate over residues 354–390 (NYTNPSSSSNGSSRDHSNAYSSGASSANAGNTFSSTI).

It belongs to the protein kinase superfamily. Ser/Thr protein kinase family. In terms of assembly, interacts with and phosphorylates 14-3-3 proteins. Binds to GRF6 at the plasma membrane. Autophosphorylated.

The protein resides in the cell membrane. It carries out the reaction L-seryl-[protein] + ATP = O-phospho-L-seryl-[protein] + ADP + H(+). It catalyses the reaction L-threonyl-[protein] + ATP = O-phospho-L-threonyl-[protein] + ADP + H(+). Its activity is regulated as follows. Activated by cold. In terms of biological role, negative regulator of freezing tolerance that phosphorylates 14-3-3 proteins (e.g. GRF6) thus triggering their translocation from the cytosol to the nucleus in response to cold stress. This is Cold-responsive protein kinase 1 from Arabidopsis thaliana (Mouse-ear cress).